Reading from the N-terminus, the 299-residue chain is uncharacterized protein (299 aa).

The next 6 helical transmembrane spans lie at 32 to 52 (FILL…YLHL), 56 to 76 (SMII…SILY), 199 to 219 (LAIG…LLGA), 220 to 240 (YLIA…VKPE), 246 to 266 (FEIV…PIFG), and 273 to 293 (FLIS…ILKF).

It localises to the cell membrane. This is an uncharacterized protein from Methanocaldococcus jannaschii (strain ATCC 43067 / DSM 2661 / JAL-1 / JCM 10045 / NBRC 100440) (Methanococcus jannaschii).